The primary structure comprises 365 residues: tRNA N6-adenosine threonylcarbamoyltransferase (365 aa).

2 residues coordinate Fe cation: His122 and His126. Substrate contacts are provided by residues 147 to 151, Asp180, Gly193, and Asn293; that span reads LVSGG. Asp321 is a binding site for Fe cation. The interval 340 to 365 is disordered; that stretch reads PNEIDTAARPRWPLSERTPATPEHVS.

It belongs to the KAE1 / TsaD family. Fe(2+) is required as a cofactor.

The protein resides in the cytoplasm. The enzyme catalyses L-threonylcarbamoyladenylate + adenosine(37) in tRNA = N(6)-L-threonylcarbamoyladenosine(37) in tRNA + AMP + H(+). In terms of biological role, required for the formation of a threonylcarbamoyl group on adenosine at position 37 (t(6)A37) in tRNAs that read codons beginning with adenine. Is involved in the transfer of the threonylcarbamoyl moiety of threonylcarbamoyl-AMP (TC-AMP) to the N6 group of A37, together with TsaE and TsaB. TsaD likely plays a direct catalytic role in this reaction. The sequence is that of tRNA N6-adenosine threonylcarbamoyltransferase from Gluconobacter oxydans (strain 621H) (Gluconobacter suboxydans).